Here is a 94-residue protein sequence, read N- to C-terminus: DASH complex subunit dad2 (94 aa).

Positions 18-38 (KLRDSSNDMVQQIETLAAKLE) form a coiled coil. The tract at residues 72–94 (VRIPPSTSNTNASATEQGDVEEV) is disordered. The span at 76 to 87 (PSTSNTNASATE) shows a compositional bias: polar residues.

The protein belongs to the DASH complex DAD2 family. As to quaternary structure, component of the DASH complex consisting of ask1, dad1, dad2, dad3, dad4, dam1, duo1, dad5, spc19 and spc34, with a stoichiometry of one copy of each subunit per complex. Multiple DASH complexes oligomerize to form a ring that encircles spindle microtubules and organizes the rod-like NDC80 complexes of the outer kinetochore. DASH complex oligomerization strengthens microtubule attachments. On cytoplasmic microtubules, DASH complexes appear to form patches instead of rings.

It is found in the nucleus. The protein resides in the cytoplasm. It localises to the cytoskeleton. Its subcellular location is the spindle. The protein localises to the chromosome. It is found in the centromere. The protein resides in the kinetochore. Component of the DASH complex that connects microtubules with kinetochores and couples microtubule depolymerisation to chromosome movement; it is involved in retrieving kinetochores to the spindle poles before their re-orientation on the spindle in early mitosis and allows microtubule depolymerization to pull chromosomes apart and resist detachment during anaphase. Kinetochores, consisting of a centromere-associated inner segment and a microtubule-contacting outer segment, play a crucial role in chromosome segregation by mediating the physical connection between centromeric DNA and microtubules. Kinetochores also serve as an input point for the spindle assembly checkpoint, which delays anaphase until all chromosomes have bioriented on the mitotic spindle. The DASH complex mediates bipolar kinetochore-microtubule attachments and facilitates the formation of additional interactions between outer kinetochore components and spindle microtubules. During chromosome movement along the microtubule, it is required both for the sliding of kinetochores along the lateral side of the microtubule and also for microtubule end-on pulling on the kinetochore. Modulates cytoplasmic microtubule dynamics by tracking the plus-end of shortening microtubules and slowing their depolymerization. In Schizosaccharomyces pombe (strain 972 / ATCC 24843) (Fission yeast), this protein is DASH complex subunit dad2.